A 389-amino-acid polypeptide reads, in one-letter code: Major outer membrane porin (389 aa).

Residues 1–23 form the signal peptide; it reads MKKLLKSALLSAAFAGSVGSLQA.

This sequence belongs to the chlamydial porin (CP) (TC 1.B.2) family. Part of a disulfide cross-linked outer membrane complex (COMC) composed of the major outer membrane porin (MOMP), the small cysteine-rich protein (OmcA) and the large cysteine-rich periplasmic protein (OmcB).

Its subcellular location is the cell outer membrane. In terms of biological role, in elementary bodies (EBs, the infectious stage, which is able to survive outside the host cell) provides the structural integrity of the outer envelope through disulfide cross-links with the small cysteine-rich protein and the large cysteine-rich periplasmic protein. It has been described in publications as the Sarkosyl-insoluble COMC (Chlamydia outer membrane complex), and serves as the functional equivalent of peptidoglycan. Permits diffusion of specific solutes through the outer membrane. The chain is Major outer membrane porin (ompA) from Chlamydia pneumoniae (Chlamydophila pneumoniae).